A 71-amino-acid chain; its full sequence is Cold shock-like protein CspB (71 aa).

Positions 7 to 67 (GLVKWFNADK…GAKGPAAANV (61 aa)) constitute a CSD domain.

The protein resides in the cytoplasm. This chain is Cold shock-like protein CspB (cspB), found in Escherichia coli (strain K12).